Reading from the N-terminus, the 350-residue chain is Dauer larva development regulatory growth factor daf-7 (350 aa).

Positions 1–21 are cleaved as a signal peptide; it reads MFMASSLPVFIFLLSLPHGLT. Positions 22–234 are excised as a propeptide; sequence FNCTNSGVCI…TRPKGSRKRR (213 aa). N23 is a glycosylation site (N-linked (GlcNAc...) asparagine). 4 disulfide bridges follow: C241–C251, C250–C315, C278–C347, and C282–C349.

It belongs to the TGF-beta family. As to expression, expressed in the chemosensory neurons, including in the ASJ neurons in males. Expressed in the ASI neurons.

It is found in the secreted. Under harsh environmental conditions, larvae enter a developmentally arrested state known as dauer; TGF-beta-like daf-7 acts to inhibit dauer larva formation and promote growth. May be a ligand to cell surface receptor daf-4. May act as a negative regulator of dauer larva development by transducing chemosensory information from ASI neurons. Involved in sensitivity to CO2 levels. Involved in mate searching behavior of males, acting in concert with the neuropeptide pdf-1. In AWC neurons, acts to promote expression of srsx-3, a member of the GPCR family. The chain is Dauer larva development regulatory growth factor daf-7 from Caenorhabditis elegans.